Reading from the N-terminus, the 284-residue chain is Bifunctional protein FolD (284 aa).

166-168 provides a ligand contact to NADP(+); it reads GAS.

The protein belongs to the tetrahydrofolate dehydrogenase/cyclohydrolase family. As to quaternary structure, homodimer.

It catalyses the reaction (6R)-5,10-methylene-5,6,7,8-tetrahydrofolate + NADP(+) = (6R)-5,10-methenyltetrahydrofolate + NADPH. The enzyme catalyses (6R)-5,10-methenyltetrahydrofolate + H2O = (6R)-10-formyltetrahydrofolate + H(+). Its pathway is one-carbon metabolism; tetrahydrofolate interconversion. Functionally, catalyzes the oxidation of 5,10-methylenetetrahydrofolate to 5,10-methenyltetrahydrofolate and then the hydrolysis of 5,10-methenyltetrahydrofolate to 10-formyltetrahydrofolate. The sequence is that of Bifunctional protein FolD from Legionella pneumophila subsp. pneumophila (strain Philadelphia 1 / ATCC 33152 / DSM 7513).